The sequence spans 367 residues: Cobalt-precorrin-5B C(1)-methyltransferase (367 aa).

The protein belongs to the CbiD family.

The catalysed reaction is Co-precorrin-5B + S-adenosyl-L-methionine = Co-precorrin-6A + S-adenosyl-L-homocysteine. The protein operates within cofactor biosynthesis; adenosylcobalamin biosynthesis; cob(II)yrinate a,c-diamide from sirohydrochlorin (anaerobic route): step 6/10. Catalyzes the methylation of C-1 in cobalt-precorrin-5B to form cobalt-precorrin-6A. This Leptospira interrogans serogroup Icterohaemorrhagiae serovar copenhageni (strain Fiocruz L1-130) protein is Cobalt-precorrin-5B C(1)-methyltransferase.